Consider the following 82-residue polypeptide: Penaeidin-3b (82 aa).

The first 19 residues, 1-19, serve as a signal peptide directing secretion; the sequence is MRLVVCLVFLASFALVCQG. Residue Gln20 is modified to Pyrrolidone carboxylic acid. 3 disulfides stabilise this stretch: Cys51–Cys66, Cys55–Cys73, and Cys67–Cys74. Serine amide is present on Ser81.

It belongs to the penaeidin family. Higher expression in hemocytes and to a lesser extent in heart, testis, gills, intestine, lymphoid organ and hepatopancreas. Traces in eyes and subcuticular epithelium. Not present in the brain.

The protein localises to the cytoplasmic granule. Its function is as follows. Antibacterial activity against M.luteus and E.coli bacteria. Antifungal activity against N.crassa and F.oxysporum. Presents chitin-binding activity. This is Penaeidin-3b from Penaeus vannamei (Whiteleg shrimp).